Consider the following 189-residue polypeptide: Accessory gene regulator protein B (189 aa).

5 helical membrane-spanning segments follow: residues 49–69, 81–100, 110–130, 143–163, and 164–184; these read IAYI…FYLI, SFWC…LVIV, IILT…ATKK, YYAI…KEPF, and AQFI…IFFI.

The protein belongs to the AgrB family.

It is found in the cell membrane. Essential for the production of a quorum sensing system signal molecule, the autoinducing peptide (AIP). This quorum sensing system is responsible for the regulation of the expression of virulence factor genes. Involved in the proteolytic processing of AgrD, the precursor of AIP. The polypeptide is Accessory gene regulator protein B (Staphylococcus aureus (strain COL)).